A 143-amino-acid polypeptide reads, in one-letter code: Large ribosomal subunit protein uL15 (143 aa).

Composition is skewed to basic residues over residues 1 to 13 (MIRKSKKITKMRG) and 23 to 38 (KKHRGAGHRGGRGNAG). Residues 1–38 (MIRKSKKITKMRGSRTCGYGEAKKHRGAGHRGGRGNAG) are disordered.

The protein belongs to the universal ribosomal protein uL15 family. As to quaternary structure, part of the 50S ribosomal subunit.

Binds to the 23S rRNA. The protein is Large ribosomal subunit protein uL15 of Methanococcus maripaludis (strain C5 / ATCC BAA-1333).